A 694-amino-acid polypeptide reads, in one-letter code: Transcriptional activator HAA1 (694 aa).

Positions 1 to 40 (MVLINGIKYACERCIRGHRVTTCNHTDQPLMMIKPKGRPS) form a DNA-binding region, copper-fist. 4 residues coordinate Zn(2+): C11, C14, C23, and H25. 2 disordered regions span residues 104–128 (QKRH…SQPM) and 209–240 (FNFL…DSSV). A compositionally biased stretch (polar residues) spans 111–126 (SPSSSQKKGRSISRSQ). Phosphoserine occurs at positions 125, 231, 241, and 291. 4 disordered regions span residues 332 to 388 (FDIN…NGLF), 479 to 514 (EKER…HRYP), 566 to 588 (SSIH…SRQD), and 650 to 677 (MIST…PPSQ). Positions 336 to 349 (DNCNRINSKSYSKT) are enriched in polar residues. A compositionally biased stretch (low complexity) spans 350 to 378 (NSMNGNGMNNSNNNNINSNGNDKNNNNSS). 2 stretches are compositionally biased toward polar residues: residues 566–577 (SSIHSVPQSINS) and 664–677 (SPMS…PPSQ).

It localises to the nucleus. Functionally, regulates the transcription of a set of genes, many of which encode membrane proteins. Among the genes regulated are YGR138C and YRO2. Does not seem to be dependent on copper. The chain is Transcriptional activator HAA1 (HAA1) from Saccharomyces cerevisiae (strain ATCC 204508 / S288c) (Baker's yeast).